A 577-amino-acid chain; its full sequence is Probable HECT-type ubiquitin ligase-interacting protein creD (577 aa).

Disordered regions lie at residues Leu-376 to Ser-398 and Asn-428 to Arg-566. 2 stretches are compositionally biased toward polar residues: residues Asn-428 to Glu-447 and Ser-460 to Glu-472. Residues Leu-473 to Val-486 are compositionally biased toward basic and acidic residues. Residues Ser-528 to Phe-544 show a composition bias toward polar residues.

This sequence belongs to the arrestin family. In terms of assembly, interacts with hulA.

Functionally, component of the regulatory network controlling carbon source utilization through ubiquitination and deubiquitination involving creA, creB, creC, creD and acrB. May be involved in signaling by recognizing appropriately phosphorylated substrates via its arrestin domains and then recruit a HECT-type ubiquitin ligase such as hulA, leading to ubiquitination of the substrate, providing a link between ubiquitination and phosphorylation in protein regulation and stability. This is Probable HECT-type ubiquitin ligase-interacting protein creD (creD) from Aspergillus terreus (strain NIH 2624 / FGSC A1156).